A 285-amino-acid polypeptide reads, in one-letter code: Energy-coupling factor transporter ATP-binding protein EcfA2 (285 aa).

In terms of domain architecture, ABC transporter spans 3–245; that stretch reads IKIENLNHIY…VETLEKIGLA (243 aa). ATP is bound at residue 40–47; that stretch reads GHTGSGKS.

This sequence belongs to the ABC transporter superfamily. Energy-coupling factor EcfA family. Forms a stable energy-coupling factor (ECF) transporter complex composed of 2 membrane-embedded substrate-binding proteins (S component), 2 ATP-binding proteins (A component) and 2 transmembrane proteins (T component).

It localises to the cell membrane. Its function is as follows. ATP-binding (A) component of a common energy-coupling factor (ECF) ABC-transporter complex. Unlike classic ABC transporters this ECF transporter provides the energy necessary to transport a number of different substrates. This chain is Energy-coupling factor transporter ATP-binding protein EcfA2, found in Clostridium perfringens (strain 13 / Type A).